We begin with the raw amino-acid sequence, 499 residues long: Maturase K (499 aa).

The protein belongs to the intron maturase 2 family. MatK subfamily.

It localises to the plastid. The protein localises to the chloroplast. Its function is as follows. Usually encoded in the trnK tRNA gene intron. Probably assists in splicing its own and other chloroplast group II introns. The sequence is that of Maturase K from Ceratozamia mexicana (Mexican horncone).